The sequence spans 319 residues: Olfactory receptor 2S2 (319 aa).

At 1–26 (MEKANETSPVMGFVLLRLSAHPELEK) the chain is on the extracellular side. Asparagine 5 carries an N-linked (GlcNAc...) asparagine glycan. The helical transmembrane segment at 27–50 (TFFVLILLMYLVILLGNGVLILVT) threads the bilayer. Topologically, residues 51 to 58 (ILDSRLHT) are cytoplasmic. Residues 59-80 (PMYFFLGNLSFLDICFTTSSVP) form a helical membrane-spanning segment. Residues 81-101 (LVLDSFLTPQETISFSACAVQ) lie on the Extracellular side of the membrane. A disulfide bridge links cysteine 98 with cysteine 190. The helical transmembrane segment at 102–121 (MALSFAMAGTECLLLSMMAF) threads the bilayer. Topologically, residues 122–140 (DRYVAICNPLRYSVIMSKA) are cytoplasmic. A helical transmembrane segment spans residues 141–159 (AYMPMAASSWAIGGAASVV). At 160 to 196 (HTSLAIQLPFCGDNVINHFTCEILAVLKLACADISIN) the chain is on the extracellular side. The helical transmembrane segment at 197–220 (VISMEVTNVIFLGVPVLFISFSYV) threads the bilayer. The Cytoplasmic portion of the chain corresponds to 221-237 (FIITTILRIPSAEGRKK). Residues 238–260 (VFSTCSAHLTVVIVFYGTLFFMY) form a helical membrane-spanning segment. Residues 261–279 (GKPKSKDSMGADKEDLSDK) lie on the Extracellular side of the membrane. The helical transmembrane segment at 280–299 (LIPLFYGVVTPMLNPIIYSL) threads the bilayer. Residues 300–319 (RNKDVKAAVRRLLRPKGFTQ) lie on the Cytoplasmic side of the membrane.

Belongs to the G-protein coupled receptor 1 family.

The protein localises to the cell membrane. In terms of biological role, odorant receptor. The chain is Olfactory receptor 2S2 (OR2S2) from Homo sapiens (Human).